A 112-amino-acid chain; its full sequence is Putative pterin-4-alpha-carbinolamine dehydratase (112 aa).

This sequence belongs to the pterin-4-alpha-carbinolamine dehydratase family.

It carries out the reaction (4aS,6R)-4a-hydroxy-L-erythro-5,6,7,8-tetrahydrobiopterin = (6R)-L-erythro-6,7-dihydrobiopterin + H2O. The sequence is that of Putative pterin-4-alpha-carbinolamine dehydratase from Shewanella halifaxensis (strain HAW-EB4).